The primary structure comprises 94 residues: Alpha-galactosyl-binding lectin (94 aa).

Homodimer. In terms of processing, contains three disulfide bonds.

Its function is as follows. Alpha-galactosyl-binding lectin with preference for galactose-alpha-1,4-galactose. This chain is Alpha-galactosyl-binding lectin, found in Lyophyllum decastes (Fried chicken mushroom).